The following is a 520-amino-acid chain: Protein-export membrane protein SecD (520 aa).

The next 6 helical transmembrane spans lie at 10–30 (IILL…PTLA), 364–384 (DSLL…FLRY), 391–411 (LPMI…AAGI), 417–437 (LSVI…LVII), 461–481 (FWVI…LAIL), and 483–503 (LGDL…GVLI).

This sequence belongs to the SecD/SecF family. SecD subfamily. In terms of assembly, part of the protein translocation apparatus. Forms a complex with SecF.

The protein localises to the cell membrane. In terms of biological role, involved in protein export. The chain is Protein-export membrane protein SecD from Haloquadratum walsbyi (strain DSM 16790 / HBSQ001).